Consider the following 136-residue polypeptide: Protein NrdI (136 aa).

Belongs to the NrdI family.

Its function is as follows. Probably involved in ribonucleotide reductase function. This chain is Protein NrdI, found in Enterobacter sp. (strain 638).